The chain runs to 225 residues: Cardiotrophin-like cytokine factor 1 (225 aa).

The first 27 residues, Met-1–Ala-27, serve as a signal peptide directing secretion. The N-linked (GlcNAc...) asparagine glycan is linked to Asn-29.

It belongs to the IL-6 superfamily. In terms of assembly, forms a heteromeric complex with cardiotrophin-like cytokine CRLF1/CLF-1; the CRLF1-CLCF1 complex is a ligand for the ciliary neurotrophic factor receptor/CNTFR. The CRLF1-CLCF1 heterodimer binds SORL1 (via N-terminal ectodomain); within this complex, the interaction is mediated predominantly by the CRLF1 moiety. The tripartite signaling complex formed by CRLF1, CLCF1 and CNTFR also binds SORL1.

It is found in the secreted. Functionally, in complex with CRLF1, forms a heterodimeric neurotropic cytokine that plays a crucial role during neuronal development. Also stimulates B-cells. Binds to and activates the ILST/gp130 receptor. The polypeptide is Cardiotrophin-like cytokine factor 1 (Clcf1) (Mus musculus (Mouse)).